A 356-amino-acid chain; its full sequence is Transcription factor MafB (356 aa).

2 disordered regions span residues 49–79 (RLQPQGSVSSTPISTPCSSVPSSPSFSPTEQ) and 140–240 (YRGA…LNVE). The segment covering 55–77 (SVSSTPISTPCSSVPSSPSFSPT) has biased composition (low complexity). Basic residues-rich tracts occupy residues 183 to 196 (AHGHHPHHHHHHHH) and 212 to 223 (HHRHHHHHHPHG). Positions 270 to 295 (RLKQKRRTLKNRGYAQSCRFKRVQQK) are basic motif. The bZIP domain maps to 270–333 (RLKQKRRTLK…DAYKLKCEKL (64 aa)). Positions 298-319 (LENEKTQLINQVEQLKQEINRL) are leucine-zipper.

This sequence belongs to the bZIP family. Maf subfamily. Homodimer or heterodimer with other bHLH-Zip transcription factors. Binds DNA as a homodimer or a heterodimer.

It is found in the nucleus. Its function is as follows. May act as a transcriptional activator or repressor. Involved in neurogenesis. Involved in the development of rhombomeres (r) 5 and 6 segments from their common precursor 'proto-segment' in the hindbrain. This chain is Transcription factor MafB (mafb), found in Danio rerio (Zebrafish).